A 149-amino-acid chain; its full sequence is Large ribosomal subunit protein uL13 (149 aa).

It belongs to the universal ribosomal protein uL13 family. As to quaternary structure, part of the 50S ribosomal subunit.

Functionally, this protein is one of the early assembly proteins of the 50S ribosomal subunit, although it is not seen to bind rRNA by itself. It is important during the early stages of 50S assembly. The sequence is that of Large ribosomal subunit protein uL13 from Saccharolobus solfataricus (strain ATCC 35092 / DSM 1617 / JCM 11322 / P2) (Sulfolobus solfataricus).